The sequence spans 448 residues: Tubulin beta chain (448 aa).

Residues Gln11, Glu69, Ser138, Gly142, Thr143, Gly144, Asn204, and Asn226 each coordinate GTP. Glu69 contacts Mg(2+).

This sequence belongs to the tubulin family. As to quaternary structure, dimer of alpha and beta chains. A typical microtubule is a hollow water-filled tube with an outer diameter of 25 nm and an inner diameter of 15 nM. Alpha-beta heterodimers associate head-to-tail to form protofilaments running lengthwise along the microtubule wall with the beta-tubulin subunit facing the microtubule plus end conferring a structural polarity. Microtubules usually have 13 protofilaments but different protofilament numbers can be found in some organisms and specialized cells. Mg(2+) serves as cofactor.

The protein localises to the cytoplasm. It is found in the cytoskeleton. In terms of biological role, tubulin is the major constituent of microtubules, a cylinder consisting of laterally associated linear protofilaments composed of alpha- and beta-tubulin heterodimers. Microtubules grow by the addition of GTP-tubulin dimers to the microtubule end, where a stabilizing cap forms. Below the cap, tubulin dimers are in GDP-bound state, owing to GTPase activity of alpha-tubulin. The sequence is that of Tubulin beta chain (TUB1) from Melampsora lini (Rust fungus).